Consider the following 776-residue polypeptide: Isoamylase (776 aa).

The signal sequence occupies residues 1–26 (MKCPKILAALLGCAVLAGVPAMPAHA). 5 residues coordinate Ca(2+): Asp-154, Glu-255, Thr-256, Asn-258, and Asp-285. Asp-401 functions as the Nucleophile in the catalytic mechanism. Cysteines 410 and 422 form a disulfide. Catalysis depends on Glu-461, which acts as the Proton donor. 2 cysteine pairs are disulfide-bonded: Cys-546–Cys-616 and Cys-738–Cys-766.

This sequence belongs to the glycosyl hydrolase 13 family. In terms of assembly, monomer. Ca(2+) serves as cofactor.

The catalysed reaction is Hydrolysis of (1-&gt;6)-alpha-D-glucosidic branch linkages in glycogen, amylopectin and their beta-limit dextrins.. The polypeptide is Isoamylase (iam) (Pseudomonas sp. (strain SMP1)).